Here is a 496-residue protein sequence, read N- to C-terminus: NAD(P)H-quinone oxidoreductase subunit 2 A, chloroplastic (496 aa).

Transmembrane regions (helical) follow at residues 13–33 (SILPECILIFSSIGILSIDLL), 41–61 (TFWSYSISLAALAISIIILLL), 83–103 (IFRFFLLICSFLCIPLSVDYI), 110–130 (VTEFLLFVLTATLGGMFLCGA), 133–153 (LISIFVASECLALSSYLLSGY), 168–188 (LLMGGASSSILVYGFSLPYGL), 213–233 (VSIAMIFILVGIGFKLSLVPF), 245–265 (PTPVVAFFSVTSKVAALALAT), 279–299 (WHLPLEILAILSMILGNLIAV), 307–327 (MLAYSSISQIGYILIGIIAGD), 338–358 (YMLIYIFMNLGTFACITSFGL), 380–400 (LSLVLCLLSLGGIPPLAGFFG), 413–435 (LYFLVSIALFTSVISIYYYSRII), and 470–490 (MILCTIASTVPGILINPIIAI).

This sequence belongs to the complex I subunit 2 family. NDH is composed of at least 16 different subunits, 5 of which are encoded in the nucleus.

Its subcellular location is the plastid. It localises to the chloroplast thylakoid membrane. It carries out the reaction a plastoquinone + NADH + (n+1) H(+)(in) = a plastoquinol + NAD(+) + n H(+)(out). The enzyme catalyses a plastoquinone + NADPH + (n+1) H(+)(in) = a plastoquinol + NADP(+) + n H(+)(out). Functionally, NDH shuttles electrons from NAD(P)H:plastoquinone, via FMN and iron-sulfur (Fe-S) centers, to quinones in the photosynthetic chain and possibly in a chloroplast respiratory chain. The immediate electron acceptor for the enzyme in this species is believed to be plastoquinone. Couples the redox reaction to proton translocation, and thus conserves the redox energy in a proton gradient. In Psilotum nudum (Whisk fern), this protein is NAD(P)H-quinone oxidoreductase subunit 2 A, chloroplastic.